Here is a 195-residue protein sequence, read N- to C-terminus: Myelin-associated neurite-outgrowth inhibitor (195 aa).

Topologically, residues 1-18 (MNPVYSPGSSGVPYANAK) are cytoplasmic. The helical transmembrane segment at 19–43 (GIGYPAGFPMGYAAAAPAYSPNMYA) threads the bilayer. The Extracellular portion of the chain corresponds to 44–143 (GPNPAFQPGY…APIPQPRGNG (100 aa)). The helical transmembrane segment at 144 to 162 (VAMGMVAGTTMAMSAGTLL) threads the bilayer. At 163–195 (TSHYPTPVAPHQVTMPTYRPPGTPTYSYVPPQW) the chain is on the cytoplasmic side.

It belongs to the FAM168 family.

It is found in the cytoplasm. It localises to the perinuclear region. The protein resides in the cell membrane. The protein localises to the cell projection. Its subcellular location is the axon. Inhibitor of neuronal axonal outgrowth. This Xenopus tropicalis (Western clawed frog) protein is Myelin-associated neurite-outgrowth inhibitor (fam168b).